The chain runs to 245 residues: Ubiquinone/menaquinone biosynthesis C-methyltransferase UbiE (245 aa).

S-adenosyl-L-methionine-binding positions include Thr71, Asp92, and Asp118–Ala119.

It belongs to the class I-like SAM-binding methyltransferase superfamily. MenG/UbiE family.

The enzyme catalyses a 2-demethylmenaquinol + S-adenosyl-L-methionine = a menaquinol + S-adenosyl-L-homocysteine + H(+). It catalyses the reaction a 2-methoxy-6-(all-trans-polyprenyl)benzene-1,4-diol + S-adenosyl-L-methionine = a 5-methoxy-2-methyl-3-(all-trans-polyprenyl)benzene-1,4-diol + S-adenosyl-L-homocysteine + H(+). It functions in the pathway quinol/quinone metabolism; menaquinone biosynthesis; menaquinol from 1,4-dihydroxy-2-naphthoate: step 2/2. The protein operates within cofactor biosynthesis; ubiquinone biosynthesis. Its function is as follows. Methyltransferase required for the conversion of demethylmenaquinol (DMKH2) to menaquinol (MKH2) and the conversion of 2-polyprenyl-6-methoxy-1,4-benzoquinol (DDMQH2) to 2-polyprenyl-3-methyl-6-methoxy-1,4-benzoquinol (DMQH2). The sequence is that of Ubiquinone/menaquinone biosynthesis C-methyltransferase UbiE from Neisseria gonorrhoeae (strain ATCC 700825 / FA 1090).